A 445-amino-acid chain; its full sequence is Tubulin beta-2 chain (445 aa).

The MREI motif motif lies at 1 to 4; sequence MREI. Gln11, Glu69, Ser138, Gly142, Thr143, Gly144, Asn204, and Asn226 together coordinate GTP. A Mg(2+)-binding site is contributed by Glu69. The interval 424–445 is disordered; that stretch reads QYQDATADEQGEFEEEGEEDEA. Acidic residues predominate over residues 429-445; sequence TADEQGEFEEEGEEDEA. 5-glutamyl polyglutamate is present on Glu438.

This sequence belongs to the tubulin family. As to quaternary structure, dimer of alpha and beta chains. A typical microtubule is a hollow water-filled tube with an outer diameter of 25 nm and an inner diameter of 15 nM. Alpha-beta heterodimers associate head-to-tail to form protofilaments running lengthwise along the microtubule wall with the beta-tubulin subunit facing the microtubule plus end conferring a structural polarity. Microtubules usually have 13 protofilaments but different protofilament numbers can be found in some organisms and specialized cells. Mg(2+) is required as a cofactor. In terms of processing, some glutamate residues at the C-terminus are polyglycylated, resulting in polyglycine chains on the gamma-carboxyl group. Glycylation is mainly limited to tubulin incorporated into axonemes (cilia and flagella) whereas glutamylation is prevalent in neuronal cells, centrioles, axonemes, and the mitotic spindle. Both modifications can coexist on the same protein on adjacent residues, and lowering polyglycylation levels increases polyglutamylation, and reciprocally. The precise function of polyglycylation is still unclear. Some glutamate residues at the C-terminus are polyglutamylated, resulting in polyglutamate chains on the gamma-carboxyl group. Polyglutamylation plays a key role in microtubule severing by spastin (SPAST). SPAST preferentially recognizes and acts on microtubules decorated with short polyglutamate tails: severing activity by SPAST increases as the number of glutamates per tubulin rises from one to eight, but decreases beyond this glutamylation threshold. In terms of tissue distribution, highly expressed in neuronal cells.

It is found in the cytoplasm. Its subcellular location is the cytoskeleton. Its function is as follows. Tubulin is the major constituent of microtubules, a cylinder consisting of laterally associated linear protofilaments composed of alpha- and beta-tubulin heterodimers. Microtubules grow by the addition of GTP-tubulin dimers to the microtubule end, where a stabilizing cap forms. Below the cap, tubulin dimers are in GDP-bound state, owing to GTPase activity of alpha-tubulin. This is Tubulin beta-2 chain from Gallus gallus (Chicken).